A 280-amino-acid polypeptide reads, in one-letter code: Protease HtpX (280 aa).

The next 2 membrane-spanning stretches (helical) occupy residues 7-26 (TFIL…GLLG) and 30-49 (GMLV…YWYS). Residue H129 coordinates Zn(2+). E130 is an active-site residue. H133 provides a ligand contact to Zn(2+). 2 consecutive transmembrane segments (helical) span residues 146–166 (ATIA…SMFG) and 178–198 (VVGM…QMAI). E203 lines the Zn(2+) pocket.

Belongs to the peptidase M48B family. The cofactor is Zn(2+).

The protein localises to the cell inner membrane. In Legionella pneumophila (strain Corby), this protein is Protease HtpX.